Consider the following 337-residue polypeptide: 4-hydroxy-2-oxovalerate aldolase (337 aa).

Residues Ile-6–Met-256 form the Pyruvate carboxyltransferase domain. Position 14–15 (Arg-14–Asp-15) interacts with substrate. Residue Asp-15 participates in Mn(2+) binding. His-18 functions as the Proton acceptor in the catalytic mechanism. Substrate is bound by residues Ser-168 and His-195. 2 residues coordinate Mn(2+): His-195 and His-197. Tyr-286 is a substrate binding site.

This sequence belongs to the 4-hydroxy-2-oxovalerate aldolase family.

The enzyme catalyses (S)-4-hydroxy-2-oxopentanoate = acetaldehyde + pyruvate. The chain is 4-hydroxy-2-oxovalerate aldolase (nahM) from Geobacillus genomosp. 3.